A 419-amino-acid polypeptide reads, in one-letter code: Probable G-protein coupled receptor 63 (419 aa).

The Extracellular portion of the chain corresponds to 1-81; sequence MVFSAVLTAF…AFKSLNLPLQ (81 aa). N-linked (GlcNAc...) asparagine glycans are attached at residues N16, N28, and N62. A helical membrane pass occupies residues 82–104; that stretch reads ITLSAIMIFILFVSFLGNLVVCL. Residues 105–115 are Cytoplasmic-facing; the sequence is MVYQKAAMRSA. The helical transmembrane segment at 116-138 threads the bilayer; the sequence is INILLASLAFADMLLAVLNMPFA. At 139–157 the chain is on the extracellular side; it reads LVTILTTRWIFGKFFCRVS. A helical membrane pass occupies residues 158-177; it reads AMFFWLFVIEGVAILLIISI. The Cytoplasmic portion of the chain corresponds to 178–196; it reads DRFLIIVQRQDKLNPYRAK. The chain crosses the membrane as a helical span at residues 197 to 216; that stretch reads VLIAVSWATSFCVAFPLAVG. The Extracellular segment spans residues 217-240; that stretch reads NPDLQIPSRAPQCVFGYTTNPGYQ. Residues 241–263 form a helical membrane-spanning segment; sequence AYVILISLISFFIPFLVILYSFM. Residues 264 to 315 lie on the Cytoplasmic side of the membrane; sequence GILNTLRHNALRIHSYPEGICLSQASKLGLMSLQRPFQMSIDMGFKTRAFTT. Residues 316 to 338 form a helical membrane-spanning segment; sequence ILILFAVFIVCWAPFTTYSLVAT. Over 339–352 the chain is Extracellular; sequence FSKHFYYQHNFFEI. The chain crosses the membrane as a helical span at residues 353-375; that stretch reads STWLLWLCYLKSALNPLIYYWRI. Residues 376–419 lie on the Cytoplasmic side of the membrane; sequence KKFHDACLDMMPKSFKFLPQLPGHTKRRIRPSAVYVCGEHRTVV.

Belongs to the G-protein coupled receptor 1 family. As to expression, expressed in brain; detected in the frontal cortex, with lower levels in the thalamus, caudate, hypothalamus and midbrain.

The protein resides in the cell membrane. Its function is as follows. Orphan receptor. May play a role in brain function. This chain is Probable G-protein coupled receptor 63 (GPR63), found in Homo sapiens (Human).